Reading from the N-terminus, the 311-residue chain is Dehydrogenase/reductase SDR family member 7C (311 aa).

The N-terminal stretch at 1–18 (MGLMAVLMLPLLLLGISG) is a signal peptide. NAD(+) contacts are provided by serine 47, leucine 49, tyrosine 191, lysine 195, and serine 226. The Proton acceptor role is filled by tyrosine 191.

Belongs to the short-chain dehydrogenases/reductases (SDR) family. As to expression, expressed in skeletal muscle and cardiac muscle. Also expressed in liver, kidney, adipocytes and skin.

The protein resides in the sarcoplasmic reticulum membrane. The catalysed reaction is all-trans-retinol + NAD(+) = all-trans-retinal + NADH + H(+). NADH-dependent oxidoreductase which catalyzes the oxidation of all-trans-retinol to all-trans-retinal. Plays a role in the regulation of cardiac and skeletal muscle metabolic functions. Maintains Ca(2+) intracellular homeostasis by repressing Ca(2+) release from the sarcoplasmic reticulum (SR) in myotubes, possibly through local alternations in NAD/NADH or retinol/retinal. Also plays a role in Ca(2+) homeostasis by controlling Ca(2+) overload in the cytosol and the SR in myotubes. Involved in glucose uptake into skeletal muscles and muscle performance by activating PI3K and mTORC2-mediated AKT1 phosphorylation signaling pathways, possibly through the action of its downstream catalytic product all-trans-retinoic acid. In Mus musculus (Mouse), this protein is Dehydrogenase/reductase SDR family member 7C.